Here is a 543-residue protein sequence, read N- to C-terminus: CTP synthase (543 aa).

The segment at 1–267 (MTKYVFVTGG…ATQVLNLLNL (267 aa)) is amidoligase domain. S13 provides a ligand contact to CTP. S13 is a UTP binding site. ATP contacts are provided by residues 14-19 (SIGKGI) and D71. Residues D71 and E141 each contribute to the Mg(2+) site. Residues 148–150 (DIE), 188–193 (KTKPTQ), and K224 each bind CTP. UTP contacts are provided by residues 188 to 193 (KTKPTQ) and K224. A Glutamine amidotransferase type-1 domain is found at 292–534 (EVAIVGKYVR…LAAAAKNSNR (243 aa)). L-glutamine is bound at residue G354. The active-site Nucleophile; for glutamine hydrolysis is the C381. Residues 382-385 (LGMQ), E405, and R462 each bind L-glutamine. Residues H507 and E509 contribute to the active site.

Belongs to the CTP synthase family. As to quaternary structure, homotetramer.

The catalysed reaction is UTP + L-glutamine + ATP + H2O = CTP + L-glutamate + ADP + phosphate + 2 H(+). It carries out the reaction L-glutamine + H2O = L-glutamate + NH4(+). The enzyme catalyses UTP + NH4(+) + ATP = CTP + ADP + phosphate + 2 H(+). The protein operates within pyrimidine metabolism; CTP biosynthesis via de novo pathway; CTP from UDP: step 2/2. Allosterically activated by GTP, when glutamine is the substrate; GTP has no effect on the reaction when ammonia is the substrate. The allosteric effector GTP functions by stabilizing the protein conformation that binds the tetrahedral intermediate(s) formed during glutamine hydrolysis. Inhibited by the product CTP, via allosteric rather than competitive inhibition. Its function is as follows. Catalyzes the ATP-dependent amination of UTP to CTP with either L-glutamine or ammonia as the source of nitrogen. Regulates intracellular CTP levels through interactions with the four ribonucleotide triphosphates. This is CTP synthase from Thermosynechococcus vestitus (strain NIES-2133 / IAM M-273 / BP-1).